The following is a 485-amino-acid chain: Glutamyl-tRNA(Gln) amidotransferase subunit A (485 aa).

Active-site charge relay system residues include K78 and S153. The active-site Acyl-ester intermediate is S177.

Belongs to the amidase family. GatA subfamily. As to quaternary structure, heterotrimer of A, B and C subunits.

It catalyses the reaction L-glutamyl-tRNA(Gln) + L-glutamine + ATP + H2O = L-glutaminyl-tRNA(Gln) + L-glutamate + ADP + phosphate + H(+). Allows the formation of correctly charged Gln-tRNA(Gln) through the transamidation of misacylated Glu-tRNA(Gln) in organisms which lack glutaminyl-tRNA synthetase. The reaction takes place in the presence of glutamine and ATP through an activated gamma-phospho-Glu-tRNA(Gln). The protein is Glutamyl-tRNA(Gln) amidotransferase subunit A of Bacillus cytotoxicus (strain DSM 22905 / CIP 110041 / 391-98 / NVH 391-98).